A 338-amino-acid chain; its full sequence is MATRARGLSLLRGRLGRGPARAPGVAERAWRGFGSSSRRHEAVIISGTEMAKQIRRELQQGVESWLALGNRRPHLSIILVGDNPASHTYVRNKIRAASAVGICSELIVKPKNVSQEELLDITDQLNMDPRVSGILVQLPLPDHVDERTICNGIAPEKDVDGFHIINIGRLCLDQHSLIPATASAVWEIIKRAGIETFGKNVVVAGRSKNVGMPIAMLLHTDGEHERPGGDATVTIAHRHTPREQLKAHTQLAEIIIVAAGIPGLITADMVREGATVIDVGINYVQDPVTGKTKLVGDVDFEAVKKKASFITPVPGGVGPMTVAMLLKNTLLAAKNITY.

Residues 89-93 (YVRNK) and 136-138 (VQL) contribute to the substrate site. NAD(+) contacts are provided by residues 205–207 (GRS) and Arg238. 314–318 (PGGVG) contributes to the substrate binding site.

This sequence belongs to the tetrahydrofolate dehydrogenase/cyclohydrolase family. Mg(2+) serves as cofactor. In terms of tissue distribution, widely expressed.

Its subcellular location is the mitochondrion inner membrane. It catalyses the reaction (6R)-5,10-methylene-5,6,7,8-tetrahydrofolate + NADP(+) = (6R)-5,10-methenyltetrahydrofolate + NADPH. The catalysed reaction is (6R)-5,10-methylene-5,6,7,8-tetrahydrofolate + NAD(+) = (6R)-5,10-methenyltetrahydrofolate + NADH. The enzyme catalyses (6R)-5,10-methenyltetrahydrofolate + H2O = (6R)-10-formyltetrahydrofolate + H(+). The protein operates within one-carbon metabolism; tetrahydrofolate interconversion. Its function is as follows. Bifunctional mitochondrial folate-interconverting enzyme that has both NAD/NADP-dependent methylenetetrahydrofolate dehydrogenase and methenyltetrahydrofolate cyclohydrolase activities. Has no NAD/NADP-dependent methylenetetrahydrofolate dehydrogenase activity. This chain is Bifunctional methylenetetrahydrofolate dehydrogenase/cyclohydrolase 2, mitochondrial, found in Rattus norvegicus (Rat).